Reading from the N-terminus, the 2254-residue chain is Voltage-dependent T-type calcium channel subunit alpha-1G (2254 aa).

The segment at 1 to 48 is disordered; sequence MDEEEDGAGAEESGQPRSFTQLNDLSGAGGRQGPGSTEKDPGSADSEA. Residues 1–80 are Cytoplasmic-facing; the sequence is MDEEEDGAGA…RSWCLRTVCN (80 aa). Polar residues predominate over residues 15 to 24; the sequence is QPRSFTQLND. An I repeat occupies 68-398; the sequence is SRPRSWCLRT…LCLVVIATQF (331 aa). A helical membrane pass occupies residues 81-101; sequence PWFERVSMLVILLNCVTLGMF. At 102-119 the chain is on the extracellular side; the sequence is RPCEDIACDSQRCRILQA. The helical transmembrane segment at 120–141 threads the bilayer; the sequence is FDDFIFAFFAVEMVVKMVALGI. The Cytoplasmic segment spans residues 142–150; it reads FGKKCYLGD. A helical membrane pass occupies residues 151-170; the sequence is TWNRLDFFIVIAGMLEYSLD. Residues 171 to 175 are Extracellular-facing; the sequence is LQNVS. N-linked (GlcNAc...) asparagine glycosylation is present at N173. Residues 176–193 form a helical membrane-spanning segment; the sequence is FSAVRTVRVLRPLRAINR. The Cytoplasmic segment spans residues 194–213; it reads VPSMRILVTLLLDTLPMLGN. The chain crosses the membrane as a helical span at residues 214–234; sequence VLLLCFFVFFIFGIVGVQLWA. The Extracellular segment spans residues 235–370; the sequence is GLLRNRCFLP…YFVMDAHSFY (136 aa). N-linked (GlcNAc...) asparagine glycans are attached at residues N246, N306, N310, and N322. Residues 371–395 form a helical membrane-spanning segment; the sequence is NFIYFILLIIVGSFFMINLCLVVIA. Residues 396-744 are Cytoplasmic-facing; sequence TQFSETKQRE…DTFRKIVDSK (349 aa). S467 is subject to Phosphoserine. Positions 494–506 are enriched in basic residues; it reads LVHHHHHHHHHYH. Disordered stretches follow at residues 494–513, 525–553, 579–598, and 699–721; these read LVHH…GTLR, DANG…AESV, ASGR…TSPP, and DAQH…GPDA. A compositionally biased stretch (pro residues) spans 534–545; that stretch reads LPPPSTPTPSGG. A Phosphoserine modification is found at S716. One copy of the II repeat lies at 730–968; that stretch reads WRLICDTFRK…LLVAILVEGF (239 aa). A helical transmembrane segment spans residues 745-765; that stretch reads YFGRGIMIAILVNTLSMGIEY. Topologically, residues 766 to 778 are extracellular; the sequence is HEQPEELTNALEI. The helical transmembrane segment at 779-800 threads the bilayer; it reads SNIVFTSLFALEMLLKLLVYGP. Residues 801 to 806 are Cytoplasmic-facing; it reads FGYIKN. Residues 807–825 form a helical membrane-spanning segment; that stretch reads PYNIFDGVIVVISVWEIVG. Topologically, residues 826–833 are extracellular; that stretch reads QQGGGLSV. The helical transmembrane segment at 834–857 threads the bilayer; sequence LRTFRLMRVLKLVRFLPALQRQLV. The Cytoplasmic portion of the chain corresponds to 858–868; that stretch reads VLMKTMDNVAT. Residues 869–889 form a helical membrane-spanning segment; the sequence is FCMLLMLFIFIFSILGMHLFG. Topologically, residues 890–940 are extracellular; sequence CKFASERDGDTLPDRKNFDSLLWAIVTVFQILTQEDWNKVLYNGMASTSSW. Residues 941 to 965 form a helical membrane-spanning segment; sequence AALYFIALMTFGNYVLFNLLVAILV. The Cytoplasmic segment spans residues 966 to 1251; sequence EGFQAEGDAT…SRFRLLCHRI (286 aa). A disordered region spans residues 1024-1209; it reads TPMSHPKSSS…GDDDNDEGNL (186 aa). Low complexity-rich tracts occupy residues 1041 to 1052 and 1065 to 1091; these read GSGSRRTSSSGS and PPSA…SRNS. 2 stretches are compositionally biased toward acidic residues: residues 1117–1126 and 1196–1206; these read ESQDEEESSE and PQLDGDDDNDE. Residues S1118, S1124, and S1125 each carry the phosphoserine modification. The III repeat unit spans residues 1242-1519; it reads SRFRLLCHRI…MFVGVVVENF (278 aa). A helical membrane pass occupies residues 1252–1274; the sequence is ITHKMFDHVVLVIIFLNCITIAM. At 1275-1292 the chain is on the extracellular side; it reads ERPKIDPHSAERIFLTLS. A helical membrane pass occupies residues 1293–1313; the sequence is NYIFTAVFLAEMTVKVVALGW. Residues 1314–1323 are Cytoplasmic-facing; that stretch reads CFGEQAYLRS. The helical transmembrane segment at 1324–1343 threads the bilayer; that stretch reads SWNVLDGLLVLISVIDILVS. The Extracellular segment spans residues 1344-1357; the sequence is MVSDSGTKILGMLR. A helical transmembrane segment spans residues 1358–1379; sequence VLRLLRTLRPLRVISRAQGLKL. The Cytoplasmic segment spans residues 1380 to 1389; that stretch reads VVETLMSSLK. The helical transmembrane segment at 1390 to 1413 threads the bilayer; that stretch reads PIGNIVVICCAFFIIFGILGVQLF. Residues 1414-1490 are Extracellular-facing; that stretch reads KGKFFVCQGE…DQQPIMNHNP (77 aa). N1427 and N1430 each carry an N-linked (GlcNAc...) asparagine glycan. A helical transmembrane segment spans residues 1491–1516; sequence WMLLYFISFLLIVAFFVLNMFVGVVV. At 1517 to 1578 the chain is on the cytoplasmic side; that stretch reads ENFHKCRQHQ…RLLVHHLCTS (62 aa). An IV repeat occupies 1564-1822; the sequence is DYSRFRLLVH…VVIAVLMKHL (259 aa). The chain crosses the membrane as a helical span at residues 1579-1599; sequence HYLDLFITGVIGLNVVTMAME. Over 1600-1613 the chain is Extracellular; it reads HYQQPQILDEALKI. Residues 1614–1635 traverse the membrane as a helical segment; sequence CNYIFTVIFVFESVFKLVAFGF. Over 1636–1642 the chain is Cytoplasmic; it reads RRFFQDR. The helical transmembrane segment at 1643–1661 threads the bilayer; the sequence is WNQLDLAIVLLSIMGITLE. Residues 1662–1675 lie on the Extracellular side of the membrane; the sequence is EIEVNLSLPINPTI. N1666 carries N-linked (GlcNAc...) asparagine glycosylation. A helical transmembrane segment spans residues 1676–1699; that stretch reads IRIMRVLRIARVLKLLKMAVGMRA. At 1700–1713 the chain is on the cytoplasmic side; sequence LLHTVMQALPQVGN. Residues 1714–1734 form a helical membrane-spanning segment; sequence LGLLFMLLFFIFAALGVELFG. Residues 1735–1794 lie on the Extracellular side of the membrane; the sequence is DLECDETHPCEGLGRHATFRNFGMAFLTLFRVSTGDNWNGIMKDTLRDCDQESTCYNTVI. A helical membrane pass occupies residues 1795–1822; that stretch reads SPIYFVSFVLTAQFVLVNVVIAVLMKHL. The Cytoplasmic segment spans residues 1823-2254; it reads EESNKEAKEE…LSSDPTDMDP (432 aa). Residues 2153-2254 are disordered; the sequence is DSGSQPRLCP…LSSDPTDMDP (102 aa). The span at 2184–2193 shows a compositional bias: low complexity; the sequence is SPPSISIDPP. Composition is skewed to polar residues over residues 2220 to 2232 and 2240 to 2254; these read PSVS…TAAS and LSLS…DMDP.

It belongs to the calcium channel alpha-1 subunit (TC 1.A.1.11) family. CACNA1G subfamily. In terms of processing, in response to raising of intracellular calcium, the T-type channels are activated by CaM-kinase II. Highly expressed in brain. Moderate expression in heart; low expression in placenta, kidney and lung.

The protein localises to the cell membrane. It localises to the cytoplasm. The enzyme catalyses Ca(2+)(in) = Ca(2+)(out). Functionally, voltage-sensitive calcium channels (VSCC) mediate the entry of calcium ions into excitable cells and are also involved in a variety of calcium-dependent processes, including muscle contraction, hormone or neurotransmitter release, gene expression, cell motility, cell division and cell death. The isoform alpha-1G gives rise to T-type calcium currents. T-type calcium channels belong to the 'low-voltage activated (LVA)' group and are strongly blocked by nickel and mibefradil. A particularity of this type of channels is an opening at quite negative potentials and a voltage-dependent inactivation. T-type channels serve pacemaking functions in both central neurons and cardiac nodal cells and support calcium signaling in secretory cells and vascular smooth muscle. They may also be involved in the modulation of firing patterns of neurons which is important for information processing as well as in cell growth processes. The protein is Voltage-dependent T-type calcium channel subunit alpha-1G (Cacna1g) of Rattus norvegicus (Rat).